The following is a 168-amino-acid chain: Segregation and condensation protein B (168 aa).

The protein belongs to the ScpB family. In terms of assembly, homodimer. Homodimerization may be required to stabilize the binding of ScpA to the Smc head domains. Component of a cohesin-like complex composed of ScpA, ScpB and the Smc homodimer, in which ScpA and ScpB bind to the head domain of Smc. The presence of the three proteins is required for the association of the complex with DNA.

The protein resides in the cytoplasm. In terms of biological role, participates in chromosomal partition during cell division. May act via the formation of a condensin-like complex containing Smc and ScpA that pull DNA away from mid-cell into both cell halves. The polypeptide is Segregation and condensation protein B (Caldanaerobacter subterraneus subsp. tengcongensis (strain DSM 15242 / JCM 11007 / NBRC 100824 / MB4) (Thermoanaerobacter tengcongensis)).